The chain runs to 150 residues: uncharacterized protein (150 aa).

In terms of domain architecture, Rhodanese spans 19–93 (GAQDYVLVDV…SSKRLALRES (75 aa)).

This is an uncharacterized protein from Synechococcus elongatus.